A 470-amino-acid chain; its full sequence is Sulfate adenylyltransferase subunit 1 (470 aa).

In terms of domain architecture, tr-type G spans 22-238; sequence KELLRFITCG…ETIKIDYAYT (217 aa). The segment at 31-38 is G1; the sequence is GSVDDGKS. GTP is bound at residue 31–38; sequence GSVDDGKS. A G2 region spans residues 89 to 93; that stretch reads GITID. Positions 110–113 are G3; sequence DTPG. GTP-binding positions include 110-114 and 165-168; these read DTPGH and NKMD. Residues 165–168 form a G4 region; that stretch reads NKMD. Residues 202-204 are G5; that stretch reads SAL.

This sequence belongs to the TRAFAC class translation factor GTPase superfamily. Classic translation factor GTPase family. CysN/NodQ subfamily. In terms of assembly, heterodimer composed of CysD, the smaller subunit, and CysN.

It catalyses the reaction sulfate + ATP + H(+) = adenosine 5'-phosphosulfate + diphosphate. It participates in sulfur metabolism; hydrogen sulfide biosynthesis; sulfite from sulfate: step 1/3. Its function is as follows. With CysD forms the ATP sulfurylase (ATPS) that catalyzes the adenylation of sulfate producing adenosine 5'-phosphosulfate (APS) and diphosphate, the first enzymatic step in sulfur assimilation pathway. APS synthesis involves the formation of a high-energy phosphoric-sulfuric acid anhydride bond driven by GTP hydrolysis by CysN coupled to ATP hydrolysis by CysD. In Francisella tularensis subsp. tularensis (strain WY96-3418), this protein is Sulfate adenylyltransferase subunit 1.